The chain runs to 287 residues: Cyclopropane mycolic acid synthase 1 (287 aa).

Residues 33-34 (YS), 68-76 (LLDVGCGWG), 94-99 (TLSKNQ), and 123-124 (WE) contribute to the S-adenosyl-L-methionine site. The active site involves cysteine 269.

It belongs to the CFA/CMAS family. In terms of assembly, homodimer.

It is found in the cytoplasm. It carries out the reaction a 1-acyl-2-(9Z)-enoyl-sn-glycero-3-phospholipid + S-adenosyl-L-methionine = a 1-acyl-2-(9-cyclopronane)-acyl-sn-glycero-3-phospholipid + S-adenosyl-L-homocysteine + H(+). It functions in the pathway lipid metabolism; mycolic acid biosynthesis. Functionally, catalyzes the conversion of a double bond to a cyclopropane ring at the distal position of an alpha mycolic acid via the transfer of a methylene group from S-adenosyl-L-methionine. Cyclopropanated mycolic acids are key factors participating in cell envelope permeability, host immunomodulation and persistence. The polypeptide is Cyclopropane mycolic acid synthase 1 (cmaA1) (Mycobacterium tuberculosis (strain ATCC 25177 / H37Ra)).